Consider the following 949-residue polypeptide: Zinc finger CCHC domain-containing protein 14 (949 aa).

Disordered regions lie at residues 25-44 (SSLN…PGGA), 59-92 (EAPV…LGKH), 200-221 (STSS…LSKV), 236-262 (AGIP…LPHC), 355-457 (KEKS…DKEK), and 739-779 (PESS…PQPA). The segment covering 28–43 (NGGGGHGGKGAPGPGG) has biased composition (gly residues). Positions 61–78 (PVSSVSNSLENALHTSAH) are enriched in polar residues. Residues 200-219 (STSSPPQQLQSPSPGNPSLS) are compositionally biased toward low complexity. Positions 395-411 (HAAELRVEVEQPHHQLP) are enriched in basic and acidic residues. The segment covering 416-425 (SSEYSSSSSS) has biased composition (low complexity). Residues 431-457 (AREESSDSAEENDRRVEIHLESSDKEK) show a composition bias toward basic and acidic residues. The CCHC-type zinc finger occupies 906-923 (LSCYNCGATGHRAQDCKQ).

The protein is Zinc finger CCHC domain-containing protein 14 (ZCCHC14) of Homo sapiens (Human).